Here is a 141-residue protein sequence, read N- to C-terminus: UPF0225 protein Rmet_0111 (141 aa).

This sequence belongs to the UPF0225 family.

This is UPF0225 protein Rmet_0111 from Cupriavidus metallidurans (strain ATCC 43123 / DSM 2839 / NBRC 102507 / CH34) (Ralstonia metallidurans).